Here is a 158-residue protein sequence, read N- to C-terminus: SsrA-binding protein (158 aa).

A disordered region spans residues 131–158 (GKKTHDKRETEKKRDWNREKARLLRDRG). A compositionally biased stretch (basic and acidic residues) spans 136–158 (DKRETEKKRDWNREKARLLRDRG).

Belongs to the SmpB family.

Its subcellular location is the cytoplasm. Functionally, required for rescue of stalled ribosomes mediated by trans-translation. Binds to transfer-messenger RNA (tmRNA), required for stable association of tmRNA with ribosomes. tmRNA and SmpB together mimic tRNA shape, replacing the anticodon stem-loop with SmpB. tmRNA is encoded by the ssrA gene; the 2 termini fold to resemble tRNA(Ala) and it encodes a 'tag peptide', a short internal open reading frame. During trans-translation Ala-aminoacylated tmRNA acts like a tRNA, entering the A-site of stalled ribosomes, displacing the stalled mRNA. The ribosome then switches to translate the ORF on the tmRNA; the nascent peptide is terminated with the 'tag peptide' encoded by the tmRNA and targeted for degradation. The ribosome is freed to recommence translation, which seems to be the essential function of trans-translation. This Brucella abortus biovar 1 (strain 9-941) protein is SsrA-binding protein.